Consider the following 457-residue polypeptide: Trigger factor (457 aa).

In terms of domain architecture, PPIase FKBP-type spans 162–243; sequence GDFVSIDLSA…VQTVKERELP (82 aa). Positions 434–457 are disordered; sequence AELFGSSEDETEADASDSAESEDK. Residues 440–457 are compositionally biased toward acidic residues; the sequence is SEDETEADASDSAESEDK.

It belongs to the FKBP-type PPIase family. Tig subfamily.

It is found in the cytoplasm. It carries out the reaction [protein]-peptidylproline (omega=180) = [protein]-peptidylproline (omega=0). In terms of biological role, involved in protein export. Acts as a chaperone by maintaining the newly synthesized protein in an open conformation. Functions as a peptidyl-prolyl cis-trans isomerase. The protein is Trigger factor of Rhodococcus erythropolis (strain PR4 / NBRC 100887).